A 463-amino-acid chain; its full sequence is Quinolone resistance protein NorB (463 aa).

A run of 14 helical transmembrane segments spans residues 17 to 37 (IGIV…VNVV), 53 to 73 (IAVS…GGLA), 86 to 106 (IILN…LLLI), 107 to 127 (IGRL…LSII), 142 to 162 (YWSI…GAVA), 165 to 185 (LGWR…LFLI), 201 to 221 (FDIK…ILIT), 230 to 250 (SLLF…FIVL), 273 to 293 (TASN…NTFV), 299 to 319 (YSSL…LIMI), 334 to 354 (PMLI…LTFL), 357 to 377 (ILYV…LGIY), 403 to 423 (MASA…YAIV), and 435 to 455 (IALW…LLLV).

This sequence belongs to the major facilitator superfamily. TCR/Tet family.

It is found in the cell membrane. In terms of biological role, multidrug efflux pump that acts independently of NorA and is one of the factors that confers resistance against diverse quinolones and chemical compounds. In Staphylococcus aureus (strain MSSA476), this protein is Quinolone resistance protein NorB (norB).